The following is a 380-amino-acid chain: Cytochrome b (380 aa).

4 helical membrane passes run 33–53, 77–98, 113–133, and 178–198; these read FGSL…FLAM, WTIR…FLHI, WNIG…GYVL, and FFTF…LHLL. His-83 and His-97 together coordinate heme b. Heme b-binding residues include His-182 and His-196. Residue His-201 participates in a ubiquinone binding. Helical transmembrane passes span 226–246, 288–308, 320–340, and 347–367; these read IKDI…TLFS, LGGV…PILH, LSQL…WIGG, and FITI…FLMP.

It belongs to the cytochrome b family. As to quaternary structure, the cytochrome bc1 complex contains 11 subunits: 3 respiratory subunits (MT-CYB, CYC1 and UQCRFS1), 2 core proteins (UQCRC1 and UQCRC2) and 6 low-molecular weight proteins (UQCRH/QCR6, UQCRB/QCR7, UQCRQ/QCR8, UQCR10/QCR9, UQCR11/QCR10 and a cleavage product of UQCRFS1). This cytochrome bc1 complex then forms a dimer. Heme b serves as cofactor.

Its subcellular location is the mitochondrion inner membrane. Component of the ubiquinol-cytochrome c reductase complex (complex III or cytochrome b-c1 complex) that is part of the mitochondrial respiratory chain. The b-c1 complex mediates electron transfer from ubiquinol to cytochrome c. Contributes to the generation of a proton gradient across the mitochondrial membrane that is then used for ATP synthesis. The protein is Cytochrome b (MT-CYB) of Gorilla gorilla gorilla (Western lowland gorilla).